The primary structure comprises 551 residues: Ubiquitin domain-containing protein DSK2b (551 aa).

One can recognise a Ubiquitin-like domain in the interval 18 to 93 (VAVNIRCSNG…IHMVRGSAPS (76 aa)). Residues 88-127 (RGSAPSSAPPPAPAASQTTAPSVTRGVGSDNSSNLGGASP) are disordered. STI1 domains follow at residues 143–184 (GNAM…QNLM) and 197–236 (NPQM…MREM). The segment covering 294–319 (QGVTTQGSDASNNSSTPNAGTGTIPN) has biased composition (polar residues). A disordered region spans residues 294–336 (QGVTTQGSDASNNSSTPNAGTGTIPNANPLPNPWGATGGQTTA). 2 STI1 domains span residues 373–410 (SPLG…MNQL) and 414–449 (NPQL…MQQM). The disordered stretch occupies residues 455-475 (SLSQNRNTASQDAGQTGAATG). Residues 465 to 475 (QDAGQTGAATG) show a composition bias toward low complexity. Positions 504–548 (PPEERYATQLQQLQEMGFYDRAENIRALLATNGNVNAAVERLLGS) constitute a UBA domain.

Interacts with 'Lys-48'-linked polyubiquitin chains via its UBA domain. Interacts with RPN10 via its ubiquitin-like domain. Interacts with PEX2 and PEX12. Ubiquitous.

The protein localises to the nucleus. It is found in the cytoplasm. Functionally, binds and presumably selects ubiquitin-conjugates for destruction. Prefers multiubiquitin chains rather than single ubiquitins, with a binding affinity for 'Lys-48'-linked ubiquitin chains. Acts as a ubiquitin receptor that associates with the 26S proteasomal docking subunit RPN10 for the indirect recognition of ubiquitinated substrates of ubiquitin/26S proteasome-mediated proteolysis (UPP). The chain is Ubiquitin domain-containing protein DSK2b (DSK2B) from Arabidopsis thaliana (Mouse-ear cress).